The sequence spans 279 residues: Small ribosomal subunit protein uS3 (279 aa).

The 70-residue stretch at 17-86 (VDEYFLEKLE…NPQIDVQEVK (70 aa)) folds into the KH type-2 domain. 2 stretches are compositionally biased toward low complexity: residues 206-233 (AEKK…STAA) and 241-252 (ESEAAEAVTPEG). The disordered stretch occupies residues 206–279 (AEKKSPAAGA…VVKTDGDSQS (74 aa)).

This sequence belongs to the universal ribosomal protein uS3 family. As to quaternary structure, part of the 30S ribosomal subunit.

Its function is as follows. Binds the lower part of the 30S subunit head. The polypeptide is Small ribosomal subunit protein uS3 (Methanocella arvoryzae (strain DSM 22066 / NBRC 105507 / MRE50)).